The chain runs to 189 residues: Dual-action ribosomal maturation protein DarP (189 aa).

Residues 1–22 are disordered; sequence MWKNGAMRGCNKETGEFLGPSR.

The protein belongs to the DarP family.

Its subcellular location is the cytoplasm. Its function is as follows. Member of a network of 50S ribosomal subunit biogenesis factors which assembles along the 30S-50S interface, preventing incorrect 23S rRNA structures from forming. Promotes peptidyl transferase center (PTC) maturation. This Xylella fastidiosa (strain Temecula1 / ATCC 700964) protein is Dual-action ribosomal maturation protein DarP.